Here is a 194-residue protein sequence, read N- to C-terminus: MAENLAGNDRLIWIDLEMTGLDTDRDSIIEIATIVTDAQLNVLAEGPELAIAHPLETLEAMDEWNRNQHRRSGLWQRVLDSQVTHAQAEAQTVAFLGEWIRAGASPMCGNSICQDRRFLHRQMSRLERYFHYRNLDVSTIKELARRWAPTVANGFAKSSAHTALSDVRDSINELRHYRQFMGALGGDTAMDVEG.

Residues 11 to 174 enclose the Exonuclease domain; that stretch reads LIWIDLEMTG…SDVRDSINEL (164 aa). Tyr132 is a catalytic residue.

This sequence belongs to the oligoribonuclease family.

It localises to the cytoplasm. Its function is as follows. 3'-to-5' exoribonuclease specific for small oligoribonucleotides. This is Oligoribonuclease from Xanthomonas oryzae pv. oryzae (strain MAFF 311018).